Consider the following 418-residue polypeptide: Putative ion-transport protein YfeO (418 aa).

A run of 12 helical transmembrane segments spans residues 10 to 30 (LLLSLPAVAIGIASSLILIVV), 54 to 74 (DSPFWIIAILTLTGIAVGLVI), 99 to 119 (ALPGLIVALILGLAGGVSLGP), 120 to 140 (EHPIMTVNIALAVAIGARLLP), 149 to 169 (ILASAGTIGALFGTPVAAALI), 186 to 206 (LFAPLMAAAAGALTTGLFFHP), 223 to 243 (ILSGAIVAAIAIAAGMVAVWC), 258 to 278 (VLMLGVGGFILGILGVIAGPV), 300 to 320 (DYFLLAVIKLAALVVAAASGF), 322 to 342 (GGRIFPAVFVGVALGLMLHEH), 343 to 363 (VPAVPAAITVSCAILGIVLVV), and 386 to 406 (LLCIVMLPAWLLLAGKPIMMV).

This sequence belongs to the chloride channel (TC 2.A.49) family.

Its subcellular location is the cell membrane. This Escherichia fergusonii (strain ATCC 35469 / DSM 13698 / CCUG 18766 / IAM 14443 / JCM 21226 / LMG 7866 / NBRC 102419 / NCTC 12128 / CDC 0568-73) protein is Putative ion-transport protein YfeO.